The chain runs to 212 residues: MHKDQIISQLIKEKIITISPDKPFTYASGMLSPIYTDLRLTVSYPDLRDMIASDLSNLIAAEFPQATIIGGVATAGIPHAALVAEKLHLPMIYVRPKPKDHGKGRQIEGRFSENDQIVLIDDLITTGGSVLNAVKATEKDGGKVAGVASIFTYYLPDAKENFKEANVKYTPLLSYPELLKKENESGHITSDQYDILKTWHEDPWAWGKKFNS.

Residues arginine 95, lysine 99, histidine 101, and 121-129 each bind 5-phospho-alpha-D-ribose 1-diphosphate; that span reads DDLITTGGS. Threonine 125 contacts orotate.

It belongs to the purine/pyrimidine phosphoribosyltransferase family. PyrE subfamily. As to quaternary structure, homodimer. Requires Mg(2+) as cofactor.

The enzyme catalyses orotidine 5'-phosphate + diphosphate = orotate + 5-phospho-alpha-D-ribose 1-diphosphate. It functions in the pathway pyrimidine metabolism; UMP biosynthesis via de novo pathway; UMP from orotate: step 1/2. Catalyzes the transfer of a ribosyl phosphate group from 5-phosphoribose 1-diphosphate to orotate, leading to the formation of orotidine monophosphate (OMP). The sequence is that of Orotate phosphoribosyltransferase from Lactobacillus johnsonii (strain CNCM I-12250 / La1 / NCC 533).